A 216-amino-acid polypeptide reads, in one-letter code: Protein fmp32, mitochondrial (216 aa).

Residues 111-133 (RQEMVALHSQVEQLFSDVERLKT) adopt a coiled-coil conformation. A helical membrane pass occupies residues 193 to 215 (TLQWVFGIVTGSGALLLAYVRLI).

This sequence belongs to the CCDC90 family.

It localises to the mitochondrion. Its subcellular location is the membrane. This is Protein fmp32, mitochondrial (fmp32) from Schizosaccharomyces pombe (strain 972 / ATCC 24843) (Fission yeast).